A 154-amino-acid chain; its full sequence is Transcriptional repressor NrdR (154 aa).

The segment at Cys3–Cys34 is a zinc-finger region. Positions Leu46 to Asp136 constitute an ATP-cone domain.

The protein belongs to the NrdR family. The cofactor is Zn(2+).

Its function is as follows. Negatively regulates transcription of bacterial ribonucleotide reductase nrd genes and operons by binding to NrdR-boxes. The sequence is that of Transcriptional repressor NrdR from Mycobacteroides abscessus (strain ATCC 19977 / DSM 44196 / CCUG 20993 / CIP 104536 / JCM 13569 / NCTC 13031 / TMC 1543 / L948) (Mycobacterium abscessus).